Reading from the N-terminus, the 128-residue chain is Aspartate 1-decarboxylase (128 aa).

Serine 25 (schiff-base intermediate with substrate; via pyruvic acid) is an active-site residue. Serine 25 is subject to Pyruvic acid (Ser). Threonine 57 provides a ligand contact to substrate. Residue tyrosine 58 is the Proton donor of the active site. Substrate is bound at residue 73–75 (GSA).

This sequence belongs to the PanD family. As to quaternary structure, heterooctamer of four alpha and four beta subunits. The cofactor is pyruvate. In terms of processing, is synthesized initially as an inactive proenzyme, which is activated by self-cleavage at a specific serine bond to produce a beta-subunit with a hydroxyl group at its C-terminus and an alpha-subunit with a pyruvoyl group at its N-terminus.

It localises to the cytoplasm. It catalyses the reaction L-aspartate + H(+) = beta-alanine + CO2. The protein operates within cofactor biosynthesis; (R)-pantothenate biosynthesis; beta-alanine from L-aspartate: step 1/1. Its function is as follows. Catalyzes the pyruvoyl-dependent decarboxylation of aspartate to produce beta-alanine. The chain is Aspartate 1-decarboxylase from Burkholderia cenocepacia (strain ATCC BAA-245 / DSM 16553 / LMG 16656 / NCTC 13227 / J2315 / CF5610) (Burkholderia cepacia (strain J2315)).